The sequence spans 258 residues: Axonemal dynein light intermediate polypeptide 1 (258 aa).

Disordered regions lie at residues 1 to 60 (MIPP…CVPD) and 202 to 231 (DLER…EEKK). Residues 176-255 (MRKALQAEQG…LKAQLEGIIA (80 aa)) adopt a coiled-coil conformation.

Belongs to the inner dynein arm light chain family. In terms of assembly, interacts with CFAP45. Interacts with DYNC1H1. In terms of tissue distribution, predominantly expressed in the testis, also detected at lower levels in several tissues expressing cilia. Strongly expressed in elongating spermatid cells (at protein level).

It localises to the cell projection. The protein resides in the cilium. Its subcellular location is the flagellum. It is found in the dynein axonemal particle. The protein localises to the cytoplasm. Its function is as follows. Involved in sperm flagellum assembly. The sequence is that of Axonemal dynein light intermediate polypeptide 1 from Mus musculus (Mouse).